A 473-amino-acid polypeptide reads, in one-letter code: Photosystem II CP43 reaction center protein (473 aa).

Positions M1–E14 are excised as a propeptide. T15 bears the N-acetylthreonine mark. Position 15 is a phosphothreonine (T15). The next 5 membrane-spanning stretches (helical) occupy residues L69 to A93, L134 to N155, K178 to T200, K255 to S275, and W291 to A312. Position 367 (E367) interacts with [CaMn4O5] cluster. A helical transmembrane segment spans residues R447 to P471.

The protein belongs to the PsbB/PsbC family. PsbC subfamily. In terms of assembly, PSII is composed of 1 copy each of membrane proteins PsbA, PsbB, PsbC, PsbD, PsbE, PsbF, PsbH, PsbI, PsbJ, PsbK, PsbL, PsbM, PsbT, PsbX, PsbY, PsbZ, Psb30/Ycf12, at least 3 peripheral proteins of the oxygen-evolving complex and a large number of cofactors. It forms dimeric complexes. It depends on Binds multiple chlorophylls and provides some of the ligands for the Ca-4Mn-5O cluster of the oxygen-evolving complex. It may also provide a ligand for a Cl- that is required for oxygen evolution. PSII binds additional chlorophylls, carotenoids and specific lipids. as a cofactor.

The protein resides in the plastid. Its subcellular location is the chloroplast thylakoid membrane. Functionally, one of the components of the core complex of photosystem II (PSII). It binds chlorophyll and helps catalyze the primary light-induced photochemical processes of PSII. PSII is a light-driven water:plastoquinone oxidoreductase, using light energy to abstract electrons from H(2)O, generating O(2) and a proton gradient subsequently used for ATP formation. The polypeptide is Photosystem II CP43 reaction center protein (Populus trichocarpa (Western balsam poplar)).